The following is a 568-amino-acid chain: Periplasmic trehalase (568 aa).

The signal sequence occupies residues 1–39 (MPHVVARSGDVMSSAAPPSCTSLLGLSLSMFVAPCTLTA). Substrate contacts are provided by residues Arg-169, 176 to 177 (WD), Asn-213, 222 to 224 (RSQ), 294 to 296 (RPE), and Gly-327. Active-site proton donor/acceptor residues include Asp-329 and Glu-511. Glu-526 is a substrate binding site.

Belongs to the glycosyl hydrolase 37 family.

The protein localises to the periplasm. The enzyme catalyses alpha,alpha-trehalose + H2O = alpha-D-glucose + beta-D-glucose. In terms of biological role, provides the cells with the ability to utilize trehalose at high osmolarity by splitting it into glucose molecules that can subsequently be taken up by the phosphotransferase-mediated uptake system. This chain is Periplasmic trehalase, found in Xanthomonas oryzae pv. oryzae (strain MAFF 311018).